The sequence spans 115 residues: Putative HNH nuclease YajD (115 aa).

Positions cysteine 27–lysine 75 constitute an HNH domain.

The protein belongs to the HNH nuclease family.

This chain is Putative HNH nuclease YajD (yajD), found in Escherichia coli O157:H7.